A 577-amino-acid polypeptide reads, in one-letter code: Isocitrate dehydrogenase kinase/phosphatase (577 aa).

Residues 318-324 (APGVRGM) and Lys-339 each bind ATP. Residue Asp-374 is part of the active site.

This sequence belongs to the AceK family.

Its subcellular location is the cytoplasm. It carries out the reaction L-seryl-[isocitrate dehydrogenase] + ATP = O-phospho-L-seryl-[isocitrate dehydrogenase] + ADP + H(+). Functionally, bifunctional enzyme which can phosphorylate or dephosphorylate isocitrate dehydrogenase (IDH) on a specific serine residue. This is a regulatory mechanism which enables bacteria to bypass the Krebs cycle via the glyoxylate shunt in response to the source of carbon. When bacteria are grown on glucose, IDH is fully active and unphosphorylated, but when grown on acetate or ethanol, the activity of IDH declines drastically concomitant with its phosphorylation. This is Isocitrate dehydrogenase kinase/phosphatase from Pseudomonas aeruginosa (strain LESB58).